Reading from the N-terminus, the 589-residue chain is V-type ATP synthase alpha chain (589 aa).

232-239 is a binding site for ATP; the sequence is GPFGSGKT.

Belongs to the ATPase alpha/beta chains family.

The catalysed reaction is ATP + H2O + 4 H(+)(in) = ADP + phosphate + 5 H(+)(out). In terms of biological role, produces ATP from ADP in the presence of a proton gradient across the membrane. The V-type alpha chain is a catalytic subunit. The chain is V-type ATP synthase alpha chain from Acetivibrio thermocellus (strain ATCC 27405 / DSM 1237 / JCM 9322 / NBRC 103400 / NCIMB 10682 / NRRL B-4536 / VPI 7372) (Clostridium thermocellum).